The primary structure comprises 269 residues: MEDKNSVIVFKNVSFQYQSDASFTLKDVSFNIPKGQWTSIVGHNGSGKSTIAKLMIGIEKVKSGEIFYNNQAITDDNFEKLRKDIGIVFQNPDNQFVGSIVKYDVAFGLENHAVPYDEMHRRVSEALKQVDMLERADYEPNALSGGQKQRVAIASVLALNPSVIILDEATSMLDPDARQNLLDLVRKVKSEHNITIISITHDLSEAMEADHVIVMNKGTVYKEGTATEIFDNAEELTRIGLDLPFPIKINQMLGHQTSFLTYEGLVDQL.

In terms of domain architecture, ABC transporter spans 8-242 (IVFKNVSFQY…AEELTRIGLD (235 aa)). 42–49 (GHNGSGKS) serves as a coordination point for ATP.

Belongs to the ABC transporter superfamily. Energy-coupling factor EcfA family. As to quaternary structure, forms a stable energy-coupling factor (ECF) transporter complex composed of 2 membrane-embedded substrate-binding proteins (S component), 2 ATP-binding proteins (A component) and 2 transmembrane proteins (T component).

It is found in the cell membrane. ATP-binding (A) component of a common energy-coupling factor (ECF) ABC-transporter complex. Unlike classic ABC transporters this ECF transporter provides the energy necessary to transport a number of different substrates. The chain is Energy-coupling factor transporter ATP-binding protein EcfA1 from Staphylococcus aureus (strain USA300).